The following is a 376-amino-acid chain: Decapping nuclease RAI1 (376 aa).

Residue Glu168 participates in a divalent metal cation binding. Cys200 and Glu217 together coordinate substrate. A divalent metal cation is bound by residues Asp219, Glu237, and Leu238. Substrate-binding residues include Lys239 and Gln263.

The protein belongs to the DXO/Dom3Z family. In terms of assembly, interacts with RAT1; the interaction is direct, stabilizes RAT1 protein structure and stimulates its exoribonuclease activity. The interaction also stimulates RAI1 pyrophosphohydrolase activity, probably by recruiting it to mRNA substrates. A divalent metal cation is required as a cofactor.

The protein resides in the nucleus. It carries out the reaction a 5'-end NAD(+)-phospho-ribonucleoside in mRNA + H2O = a 5'-end phospho-ribonucleoside in mRNA + NAD(+) + H(+). The catalysed reaction is a 5'-end (N(7)-methyl 5'-triphosphoguanosine)-ribonucleoside-ribonucleotide in mRNA + H2O = a (N(7)-methyl 5'-triphosphoguanosine)-nucleoside + a 5'-end phospho-ribonucleoside in mRNA + H(+). It catalyses the reaction a 5'-end triphospho-ribonucleoside in mRNA + H2O = a 5'-end phospho-ribonucleoside in mRNA + diphosphate + H(+). In terms of biological role, decapping enzyme for NAD-capped RNAs: specifically hydrolyzes the nicotinamide adenine dinucleotide (NAD) cap from a subset of RNAs by removing the entire NAD moiety from the 5'-end of an NAD-capped RNA. The NAD-cap is present at the 5'-end of some RNAs and snoRNAs. In contrast to the canonical 5'-end N7 methylguanosine (m7G) cap, the NAD cap promotes mRNA decay. Also acts as a non-canonical decapping enzyme that removes the entire cap structure of m7G capped or incompletely capped RNAs. Has decapping activity toward incomplete 5'-end m7G cap mRNAs such as unmethylated 5'-end-capped RNA (cap0), while it has no activity toward 2'-O-ribose methylated m7G cap (cap1). Also possesses RNA 5'-pyrophosphohydrolase activity by hydrolyzing the 5'-end triphosphate to release pyrophosphates. Stimulates exoribonuclease activity of Rat1, allowing it to degrade RNAs with stable secondary structure more effectively. In Gibberella zeae (strain ATCC MYA-4620 / CBS 123657 / FGSC 9075 / NRRL 31084 / PH-1) (Wheat head blight fungus), this protein is Decapping nuclease RAI1 (RAI1).